We begin with the raw amino-acid sequence, 248 residues long: Small ribosomal subunit protein eS6 (248 aa).

The segment at 213-248 (LLAQRKKESKAKREEAKRRRSASMRESKSSISSDKK) is disordered. The segment covering 223-248 (AKREEAKRRRSASMRESKSSISSDKK) has biased composition (basic and acidic residues).

This sequence belongs to the eukaryotic ribosomal protein eS6 family. Component of the small ribosomal subunit. Part of the small subunit (SSU) processome, composed of more than 70 proteins and the RNA chaperone small nucleolar RNA (snoRNA) U3. Ribosomal protein S6 is the major substrate of protein kinases in eukaryote ribosomes.

The protein resides in the cytoplasm. It is found in the nucleus. The protein localises to the nucleolus. In terms of biological role, component of the 40S small ribosomal subunit. Plays an important role in controlling cell growth and proliferation through the selective translation of particular classes of mRNA. Part of the small subunit (SSU) processome, first precursor of the small eukaryotic ribosomal subunit. During the assembly of the SSU processome in the nucleolus, many ribosome biogenesis factors, an RNA chaperone and ribosomal proteins associate with the nascent pre-rRNA and work in concert to generate RNA folding, modifications, rearrangements and cleavage as well as targeted degradation of pre-ribosomal RNA by the RNA exosome. The chain is Small ribosomal subunit protein eS6 (RpS6) from Glossina morsitans morsitans (Savannah tsetse fly).